A 341-amino-acid chain; its full sequence is Methionine import ATP-binding protein MetN 1 (341 aa).

The 240-residue stretch at 2–241 (IEFRQVSKSF…PKTTIAQNFV (240 aa)) folds into the ABC transporter domain. Residue 38 to 45 (GYSGAGKS) coordinates ATP.

Belongs to the ABC transporter superfamily. Methionine importer (TC 3.A.1.24) family. The complex is composed of two ATP-binding proteins (MetN), two transmembrane proteins (MetI) and a solute-binding protein (MetQ).

It localises to the cell membrane. The catalysed reaction is L-methionine(out) + ATP + H2O = L-methionine(in) + ADP + phosphate + H(+). The enzyme catalyses D-methionine(out) + ATP + H2O = D-methionine(in) + ADP + phosphate + H(+). Functionally, part of the ABC transporter complex MetNIQ involved in methionine import. Responsible for energy coupling to the transport system. This chain is Methionine import ATP-binding protein MetN 1, found in Staphylococcus aureus (strain bovine RF122 / ET3-1).